A 220-amino-acid polypeptide reads, in one-letter code: Peritrophin-55 (220 aa).

Positions 1-19 (MKSVFVCTLVLALAHHAFA) are cleaved as a signal peptide. Asparagine 29 carries N-linked (GlcNAc...) asparagine glycosylation. The Chitin-binding type-2 domain occupies 33–95 (ITPCLGNDII…NFIPAPTCEY (63 aa)). Cysteines 68 and 84 form a disulfide. Residues 116-165 (TTLKTTPSKTTPIVTTAPPSTPVPSTIVTNKPDPTTPKTTKPPKVTTTVN) are compositionally biased toward low complexity. The segment at 116–220 (TTLKTTPSKT…TPPSIVQLQN (105 aa)) is disordered. Positions 197-210 (PTPPGMPPTPPSFG) are enriched in pro residues.

Glycosylated. In terms of tissue distribution, larval peritrophic membrane.

In terms of biological role, may bind oligosaccharide structures. This Lucilia cuprina (Green bottle fly) protein is Peritrophin-55.